The following is a 367-amino-acid chain: Cystinosin (367 aa).

Positions 1 to 22 (MRRNWLLILTLFLLMFIEKYES) are cleaved as a signal peptide. The Lumenal segment spans residues 23–125 (TVSLTAPPTV…LVIHSRIVSI (103 aa)). N-linked (GlcNAc...) asparagine glycosylation is found at Asn-36, Asn-51, Asn-66, Asn-84, Asn-104, and Asn-107. In terms of domain architecture, PQ-loop 1 spans 123–189 (VSIINQVIGW…LLWVPYIQEE (67 aa)). Residues 126 to 150 (INQVIGWIYFMAWSVSFYPQVIQNW) form a helical membrane-spanning segment. At 151–159 (RRKSVIGLS) the chain is on the cytoplasmic side. The helical transmembrane segment at 160 to 179 (FDFLALNLTGFVAYSVFNIG) threads the bilayer. Asn-166 contributes to the L-cystine binding site. The Lumenal portion of the chain corresponds to 180–202 (LLWVPYIQEEFLLKYPNGVNPVD). The chain crosses the membrane as a helical span at residues 203-225 (SNDAFFSLHAVALTLIVILQCCL). Asp-205 contacts H(+). Residues 226–234 (YERGNQRVS) are Cytoplasmic-facing. The helical transmembrane segment at 235-257 (WPSIGFLVLAWLFVLVTMIVAAV) threads the bilayer. The Lumenal portion of the chain corresponds to 258-263 (GITTWL). The PQ-loop 2 domain maps to 263 to 328 (LQFLFCFSYI…QSYNNDQWTL (66 aa)). Residues 264–289 (QFLFCFSYIKLIITLIKYFPQAYMNF) traverse the membrane as a helical segment. Lys-273, Lys-280, and Tyr-281 together coordinate L-cystine. The Cytoplasmic segment spans residues 290 to 298 (YYKSTKGWS). The chain crosses the membrane as a helical span at residues 299-308 (IGGVLLDFTG). Asp-305 contributes to the L-cystine binding site. Asp-305 contributes to the H(+) binding site. Residues 309-331 (GSFSLLQMFLQSYNNDQWTLIFG) lie on the Lumenal side of the membrane. A helical membrane pass occupies residues 332–354 (DPTKFGLGVFTIFFDVVFFIQHF). A H(+)-binding site is contributed by Asp-346. Residues 355-367 (YLYRKKPGYDQLN) lie on the Cytoplasmic side of the membrane. The short motif at 362 to 366 (GYDQL) is the Lysosomal targeting motif element.

The protein belongs to the cystinosin family. In terms of assembly, interacts with components of the V-ATPase complex. Interacts with components of the Ragulator complex. Interacts with RRAGA/RagA and RRAGC/RagC. Interacts with AP-3 complex subunit mu (AP3M1 or AP3M2).

Its subcellular location is the lysosome membrane. The protein resides in the melanosome membrane. The enzyme catalyses L-cystine(out) + H(+)(out) = L-cystine(in) + H(+)(in). Switches between a lumen- and a cytosol-open conformation: pH induces conformational changes and shifts the equilibrium to facilitate the transition between the lumen- and cytosol-open conformation, thereby promoting cystine transport. Protonation of specific aspartate residues (Asp-205, Asp-305 and Asp-346) favors the cytosol-open conformation. In terms of biological role, cystine/H(+) symporter that mediates export of cystine, the oxidized dimer of cysteine, from lysosomes. Plays an important role in melanin synthesis by catalyzing cystine export from melanosomes, possibly by inhibiting pheomelanin synthesis. In addition to cystine export, also acts as a positive regulator of mTORC1 signaling in kidney proximal tubular cells, via interactions with components of the v-ATPase and Ragulator complexes. Also involved in small GTPase-regulated vesicle trafficking and lysosomal localization of LAMP2A, independently of cystine transporter activity. The protein is Cystinosin of Mus musculus (Mouse).